The following is an 80-amino-acid chain: Sulfur carrier protein TusA (80 aa).

C17 functions as the Cysteine persulfide intermediate in the catalytic mechanism.

Belongs to the sulfur carrier protein TusA family.

It is found in the cytoplasm. Sulfur carrier protein which probably makes part of a sulfur-relay system. The chain is Sulfur carrier protein TusA from Pseudomonas entomophila (strain L48).